The chain runs to 310 residues: DNA damage-repair/toleration protein DRT102 (310 aa).

The residue at position 2 (Ala-2) is an N-acetylalanine. The 64-residue stretch at 219 to 282 (IVRFKAGSVE…HRVKYHEDTE (64 aa)) folds into the Cupin type-2 domain.

This chain is DNA damage-repair/toleration protein DRT102 (DRT102), found in Arabidopsis thaliana (Mouse-ear cress).